Consider the following 474-residue polypeptide: tRNA (guanine(37)-N(1))-methyltransferase (474 aa).

S-adenosyl-L-methionine-binding positions include His234, 274 to 275 (DL), 303 to 304 (DA), and Asn345. The segment covering 452–464 (EPEAQCESEEAEE) has biased composition (acidic residues). A disordered region spans residues 452-474 (EPEAQCESEEAEEPSSKRIKVDT). The segment covering 465–474 (PSSKRIKVDT) has biased composition (basic and acidic residues).

It belongs to the class I-like SAM-binding methyltransferase superfamily. TRM5/TYW2 family. As to quaternary structure, monomer.

It localises to the mitochondrion matrix. The protein resides in the nucleus. Its subcellular location is the cytoplasm. The catalysed reaction is guanosine(37) in tRNA + S-adenosyl-L-methionine = N(1)-methylguanosine(37) in tRNA + S-adenosyl-L-homocysteine + H(+). Its function is as follows. Specifically methylates the N1 position of guanosine-37 in various cytoplasmic and mitochondrial tRNAs. Methylation is not dependent on the nature of the nucleoside 5' of the target nucleoside. This is the first step in the biosynthesis of wybutosine (yW), a modified base adjacent to the anticodon of tRNAs and required for accurate decoding. The chain is tRNA (guanine(37)-N(1))-methyltransferase from Caenorhabditis elegans.